A 410-amino-acid chain; its full sequence is Regulator of microtubule dynamics protein 2 (410 aa).

Residues 9-28 (LILGIMVGTAGISLLLLWYH) form a helical membrane-spanning segment. S51 is modified (phosphoserine). A coiled-coil region spans residues 68–110 (FQERQLQILEKLNELLTNMEELKEEIRFLKEAIPKLEEYIQDE). S121 is modified (phosphoserine). A compositionally biased stretch (basic residues) spans 122-131 (PQHRARKRRL). Positions 122–164 (PQHRARKRRLPTIQSSATSNSSEEAESEGGYITANTDTEEQSF) are disordered. A Phosphothreonine modification is found at T139. Y152 is subject to Phosphotyrosine. Phosphothreonine is present on residues T154 and T157.

It belongs to the RMDN family. As to quaternary structure, interacts with microtubules.

It localises to the membrane. Its subcellular location is the cytoplasm. The protein resides in the cytoskeleton. The protein localises to the spindle. It is found in the spindle pole. In Homo sapiens (Human), this protein is Regulator of microtubule dynamics protein 2 (RMDN2).